The chain runs to 419 residues: Serine hydroxymethyltransferase (419 aa).

(6S)-5,6,7,8-tetrahydrofolate-binding positions include Leu-121 and 125–127; that span reads GHL. An N6-(pyridoxal phosphate)lysine modification is found at Lys-229.

Belongs to the SHMT family. Homodimer. It depends on pyridoxal 5'-phosphate as a cofactor.

It is found in the cytoplasm. It carries out the reaction (6R)-5,10-methylene-5,6,7,8-tetrahydrofolate + glycine + H2O = (6S)-5,6,7,8-tetrahydrofolate + L-serine. The protein operates within one-carbon metabolism; tetrahydrofolate interconversion. Its pathway is amino-acid biosynthesis; glycine biosynthesis; glycine from L-serine: step 1/1. In terms of biological role, catalyzes the reversible interconversion of serine and glycine with tetrahydrofolate (THF) serving as the one-carbon carrier. This reaction serves as the major source of one-carbon groups required for the biosynthesis of purines, thymidylate, methionine, and other important biomolecules. Also exhibits THF-independent aldolase activity toward beta-hydroxyamino acids, producing glycine and aldehydes, via a retro-aldol mechanism. This chain is Serine hydroxymethyltransferase, found in Streptomyces griseus subsp. griseus (strain JCM 4626 / CBS 651.72 / NBRC 13350 / KCC S-0626 / ISP 5235).